Here is a 96-residue protein sequence, read N- to C-terminus: Growth-regulated alpha protein (96 aa).

Residues 1–24 (MVSATRSLLCAALPVLATSRQATG) form the signal peptide. 2 disulfides stabilise this stretch: cysteine 33–cysteine 59 and cysteine 35–cysteine 75.

It belongs to the intercrine alpha (chemokine CxC) family. Monomer and homodimer. In terms of tissue distribution, at least expressed in the lung and trachea.

The protein localises to the secreted. Has chemotactic activity for neutrophils. Contributes to neutrophil activation during inflammation. This is Growth-regulated alpha protein (Cxcl1) from Rattus norvegicus (Rat).